Consider the following 296-residue polypeptide: Probable ribosomal RNA small subunit methyltransferase A (296 aa).

The span at 1–16 shows a compositional bias: polar residues; it reads MTDATSGSDPDSTTPV. The interval 1–25 is disordered; it reads MTDATSGSDPDSTTPVDLTGEDFRD. S-adenosyl-L-methionine is bound by residues H44, L46, G72, E93, D121, and N136.

It belongs to the class I-like SAM-binding methyltransferase superfamily. rRNA adenine N(6)-methyltransferase family. RsmA subfamily.

It localises to the cytoplasm. Its function is as follows. Specifically dimethylates two adjacent adenosines in the loop of a conserved hairpin near the 3'-end of 16S rRNA in the 30S particle. May play a critical role in biogenesis of 30S subunits. The protein is Probable ribosomal RNA small subunit methyltransferase A of Haloquadratum walsbyi (strain DSM 16790 / HBSQ001).